An 837-amino-acid polypeptide reads, in one-letter code: Granulocyte colony-stimulating factor receptor (837 aa).

Residues 1 to 25 form the signal peptide; the sequence is MVGLGACTLTGVTLIFLLLPRSLES. 2 disulfides stabilise this stretch: C26–C52 and C46–C102. One can recognise an Ig-like C2-type domain in the interval 26–118; that stretch reads CGHIEISPPV…SVQLLDQAEL (93 aa). At 26 to 626 the chain is on the extracellular side; the sequence is CGHIEISPPV…LTLRTLDPSD (601 aa). N-linked (GlcNAc...) asparagine glycans are attached at residues N51, N94, and N129. 5 Fibronectin type-III domains span residues 126 to 231, 236 to 331, 334 to 433, 434 to 529, and 530 to 624; these read SPSN…LEPP, LDIG…LRPT, APTI…NEGP, AVTG…GERA, and PPHA…TLDP. Cystine bridges form between C132-C143, C168-C219, C178-C187, C249-C296, and C267-C310. Residues N186 and N279 are each glycosylated (N-linked (GlcNAc...) asparagine). The short motif at 319–323 is the WSXWS motif element; the sequence is WSPWS. N-linked (GlcNAc...) asparagine glycans are attached at residues N392, N408, N474, N487, N582, and N613. A helical membrane pass occupies residues 627 to 650; the sequence is LNIFLGILCLVLLSTTCVVTWLCC. At 651–837 the chain is on the cytoplasmic side; it reads KRRGKTSFWS…VHGVEEQGGF (187 aa). The Box 1 motif motif lies at 658 to 666; sequence FWSDVPDPA.

The protein belongs to the type I cytokine receptor family. Type 2 subfamily. Homodimer. The dimeric receptor binds two CSF3 molecules. Interacts with CEACAM1; down-regulates the CSF3R-STAT3 pathway through recruitment of PTPN6 that dephosphorylates CSF3R. Post-translationally, N-glycosylated. As to expression, found in bone marrow.

It localises to the membrane. Functionally, receptor for granulocyte colony-stimulating factor (CSF3). In addition it may function in some adhesion or recognition events at the cell surface. This is Granulocyte colony-stimulating factor receptor (Csf3r) from Mus musculus (Mouse).